The chain runs to 205 residues: Ribosomal RNA small subunit methyltransferase G (205 aa).

Residues Gly76, Leu81, 127–128, and Arg140 each bind S-adenosyl-L-methionine; that span reads IE.

It belongs to the methyltransferase superfamily. RNA methyltransferase RsmG family.

The protein localises to the cytoplasm. The catalysed reaction is guanosine(527) in 16S rRNA + S-adenosyl-L-methionine = N(7)-methylguanosine(527) in 16S rRNA + S-adenosyl-L-homocysteine. Specifically methylates the N7 position of guanine in position 527 of 16S rRNA. The chain is Ribosomal RNA small subunit methyltransferase G from Francisella tularensis subsp. tularensis (strain FSC 198).